A 456-amino-acid chain; its full sequence is F-box/FBD/LRR-repeat protein At3g52680 (456 aa).

The region spanning 20–73 is the F-box domain; the sequence is KDRISELPDGLLLKILSSLPTNIVVATSVLSKQWRSLWKLVPNLEFDSDDYESE. LRR repeat units follow at residues 74-100, 102-127, 152-179, 180-205, 225-252, 270-295, and 318-344; these read HYTF…RLKF, NFNP…VLDF, TLKL…HLEF, VRYK…RLYR, TIHD…LIEE, IAEV…LLNL, and TREA…KLTD. Residues 358 to 409 enclose the FBD domain; sequence KWNEPKDVPECLLSQLETFVWRRFDWGREEEKEIATYILKNGRRLKKATFST.

In Arabidopsis thaliana (Mouse-ear cress), this protein is F-box/FBD/LRR-repeat protein At3g52680.